The chain runs to 131 residues: Small ribosomal subunit protein uS8 (131 aa).

The protein belongs to the universal ribosomal protein uS8 family. In terms of assembly, part of the 30S ribosomal subunit. Contacts proteins S5 and S12.

One of the primary rRNA binding proteins, it binds directly to 16S rRNA central domain where it helps coordinate assembly of the platform of the 30S subunit. This chain is Small ribosomal subunit protein uS8, found in Prosthecochloris aestuarii (strain DSM 271 / SK 413).